Consider the following 450-residue polypeptide: LanC-like protein 2 (450 aa).

Gly2 is lipidated: N-myristoyl glycine. Residues 2-15 (GETMSKRLKLHLGG) form an interaction with inositol phospholipids region. Phosphotyrosine is present on Tyr198.

It belongs to the LanC-like protein family. As to quaternary structure, interacts with an array of inositol phospholipids such as phosphatidylinositol 3-phosphate (PI3P), phosphatidylinositol 4-phosphate (PI4P) and phosphatidylinositol 5-phosphate (PI5P). PIP-binding enhances membrane association. In terms of processing, myristoylated. Essential for membrane association. Expressed in brain and testis.

Its subcellular location is the nucleus. The protein localises to the cytoplasm. It localises to the cell membrane. In terms of biological role, necessary for abscisic acid (ABA) binding on the cell membrane and activation of the ABA signaling pathway in granulocytes. The protein is LanC-like protein 2 (LANCL2) of Homo sapiens (Human).